We begin with the raw amino-acid sequence, 74 residues long: Exodeoxyribonuclease 7 small subunit (74 aa).

It belongs to the XseB family. Heterooligomer composed of large and small subunits.

The protein resides in the cytoplasm. It carries out the reaction Exonucleolytic cleavage in either 5'- to 3'- or 3'- to 5'-direction to yield nucleoside 5'-phosphates.. Functionally, bidirectionally degrades single-stranded DNA into large acid-insoluble oligonucleotides, which are then degraded further into small acid-soluble oligonucleotides. In Actinobacillus pleuropneumoniae serotype 5b (strain L20), this protein is Exodeoxyribonuclease 7 small subunit.